Reading from the N-terminus, the 604-residue chain is Protein glass (604 aa).

4 disordered regions span residues isoleucine 111–tryptophan 139, asparagine 199–asparagine 237, leucine 359–serine 400, and glutamate 414–methionine 434. Low complexity-rich tracts occupy residues alanine 117 to asparagine 126 and serine 200 to asparagine 237. The segment covering glutamate 414 to glutamate 427 has biased composition (acidic residues). C2H2-type zinc fingers lie at residues asparagine 437–histidine 459, tyrosine 465–histidine 487, phenylalanine 493–histidine 515, tyrosine 521–histidine 543, and tyrosine 549–histidine 571. Positions arginine 566–threonine 604 are disordered. Low complexity predominate over residues glycine 572–asparagine 581. Over residues glycine 582 to threonine 604 the composition is skewed to gly residues.

It is found in the nucleus. Its function is as follows. Transcription factor required for gene expression specific to photoreceptor cells. The chain is Protein glass (gl) from Drosophila melanogaster (Fruit fly).